Consider the following 409-residue polypeptide: Putative competence-damage inducible protein (409 aa).

Belongs to the CinA family.

The polypeptide is Putative competence-damage inducible protein (Clostridium botulinum (strain ATCC 19397 / Type A)).